Reading from the N-terminus, the 225-residue chain is Sugar fermentation stimulation protein homolog (225 aa).

This sequence belongs to the SfsA family.

The sequence is that of Sugar fermentation stimulation protein homolog from Sulfurisphaera tokodaii (strain DSM 16993 / JCM 10545 / NBRC 100140 / 7) (Sulfolobus tokodaii).